Reading from the N-terminus, the 236-residue chain is MLNRNYRGLLGTKLGMTQVWDANNRVVPVTVIQAGPNVVTQVKTPDSDGYSAVQLGYGEIDPRRINKPMRGHFETSGATPRRHLVELRTADAGNYRPGQQLTGEVFDAGQVVDVTGTSKGKGFAGVMKRHGFKGLGAGHGVERKHRSPGSVGGCATPGRVFKGLRMAGRMGHDRVTVAGLTIHAVDTERGFLLIKGAIPGPDGGLVFVRSAAKRPAPEPAAPVAAAAAGTGEEASA.

The disordered stretch occupies residues 215-236; it reads PAPEPAAPVAAAAAGTGEEASA. Over residues 221 to 236 the composition is skewed to low complexity; the sequence is APVAAAAAGTGEEASA.

It belongs to the universal ribosomal protein uL3 family. In terms of assembly, part of the 50S ribosomal subunit. Forms a cluster with proteins L14 and L19.

In terms of biological role, one of the primary rRNA binding proteins, it binds directly near the 3'-end of the 23S rRNA, where it nucleates assembly of the 50S subunit. The protein is Large ribosomal subunit protein uL3 of Parafrankia sp. (strain EAN1pec).